Consider the following 140-residue polypeptide: Probable transport accessory protein MmpS4 (140 aa).

Residues 2–22 (LMRTWIPLVILVVVIVGGFTV) form a helical membrane-spanning segment.

Belongs to the MmpS family.

It is found in the cell membrane. The sequence is that of Probable transport accessory protein MmpS4 (mmpS4) from Mycobacterium bovis (strain ATCC BAA-935 / AF2122/97).